A 248-amino-acid polypeptide reads, in one-letter code: MRKAIIAGNWKMNKTVDEAVKVVEELKPLVKDATCDVVVCPTFVCLDAVKKATAGSNIKVAAQNMHFEESGAFTGEVAPGMLEAMGIEYVVLGHSERREYFNETDEAINKKVKAAFAHNITPIVCCGETLEQRESGVTNNFIACQIKVDIAGLTKEQAEKVVIAYEPIWAIGTGKTATKEQANETILAIRNVVVEMYGKEVADKVRIQYGGSVKPNTITEQMAMSDIDGALVGGASLKAEDFSGIVNY.

A substrate-binding site is contributed by 9-11 (NWK). Histidine 94 acts as the Electrophile in catalysis. Glutamate 166 serves as the catalytic Proton acceptor. Substrate contacts are provided by residues glycine 172, serine 212, and 233 to 234 (GG).

This sequence belongs to the triosephosphate isomerase family. As to quaternary structure, homodimer.

The protein localises to the cytoplasm. The catalysed reaction is D-glyceraldehyde 3-phosphate = dihydroxyacetone phosphate. The protein operates within carbohydrate biosynthesis; gluconeogenesis. Its pathway is carbohydrate degradation; glycolysis; D-glyceraldehyde 3-phosphate from glycerone phosphate: step 1/1. Functionally, involved in the gluconeogenesis. Catalyzes stereospecifically the conversion of dihydroxyacetone phosphate (DHAP) to D-glyceraldehyde-3-phosphate (G3P). This chain is Triosephosphate isomerase, found in Clostridium botulinum (strain Eklund 17B / Type B).